The chain runs to 200 residues: Systemin (200 aa).

The tract at residues M1–E33 is disordered. Propeptides lie at residues M1–L178 and N197–L200. The stretch at T3–I8 is one 1; truncated repeat. The segment covering I8–E33 has biased composition (basic and acidic residues). Repeat copies occupy residues E37–I45, E80–I88, E117–I125, and D145–I153. Disordered regions lie at residues E106–E159 and L178–L200. Composition is skewed to basic and acidic residues over residues E111–H140 and K146–G158.

In terms of tissue distribution, all organs except the roots. Transported out of wounds to distal tissues.

It localises to the cytoplasm. Activates a lipid-based signal transduction pathway in which linolenic acid is converted to jasmonic acid, a potent activator of defense gene transcription, including proteinase inhibitor. The protein is Systemin of Solanum lycopersicum (Tomato).